We begin with the raw amino-acid sequence, 471 residues long: Putative multidrug resistance protein MdtD (471 aa).

The Periplasmic segment spans residues 1-11 (MTDLPDSTRWQ). The helical transmembrane segment at 12-32 (LWIVAFGFFMQSLDTTIVNTA) threads the bilayer. Over 33–48 (LPSMAQSLGESPLHMH) the chain is Cytoplasmic. The chain crosses the membrane as a helical span at residues 49 to 69 (MVIVSYVLTVAVMLPASGWLA). Over 70–76 (DKVGVRN) the chain is Periplasmic. A helical transmembrane segment spans residues 77-97 (IFFTAIVLFTLGSLFCALSGT). Residues 98–101 (LNEL) are Cytoplasmic-facing. The helical transmembrane segment at 102–124 (LLARALQGVGGAMMVPVGRLTVM) threads the bilayer. Topologically, residues 125–137 (KIVPREQYMAAMT) are periplasmic. The chain crosses the membrane as a helical span at residues 138–158 (FVTLPGQVGPLLGPALGGLLV). Topologically, residues 159–164 (EYASWH) are cytoplasmic. A helical membrane pass occupies residues 165-185 (WIFLINIPVGIIGAIATLMLM). Over 186–196 (PNYTMQTRRFD) the chain is Periplasmic. A helical transmembrane segment spans residues 197–217 (LSGFLLLAVGMAVLTLALDGS). The Cytoplasmic portion of the chain corresponds to 218–224 (KGTGLSP). The chain crosses the membrane as a helical span at residues 225 to 245 (LTIDGLVAVGVVALVLYLLHA). Topologically, residues 246–262 (RNNNRALFSLKLFRTRT) are periplasmic. Residues 263–283 (FSLGLAGSFAGRIGSGMLPFM) traverse the membrane as a helical segment. The Cytoplasmic portion of the chain corresponds to 284-285 (TP). A helical transmembrane segment spans residues 286-306 (VFLQIGLGFSPFHAGLMMIPM). Residues 307-341 (VLGSMGMKRIVVQVVNRFGYRRVLVATTLGLSLVT) lie on the Periplasmic side of the membrane. The helical transmembrane segment at 342–362 (LLFMTTALLGWYYVLPFVLFL) threads the bilayer. Residues 363 to 395 (QGMVNSTRFSSMNTLTLKDLPDNLASSGNSLLS) are Cytoplasmic-facing. The helical transmembrane segment at 396 to 416 (MIMQLSMSIGVTIAGLLLGLF) threads the bilayer. Residues 417–430 (GSQHVSVDSGTTQT) are Periplasmic-facing. Residues 431 to 451 (VFMYTWLSMAFIIALPAFIFA) traverse the membrane as a helical segment. The Cytoplasmic segment spans residues 452 to 471 (RVPNDTHQNVAISRRKRSAQ).

It belongs to the major facilitator superfamily. TCR/Tet family.

The protein resides in the cell inner membrane. The sequence is that of Putative multidrug resistance protein MdtD from Escherichia coli O8 (strain IAI1).